Consider the following 372-residue polypeptide: uncharacterized protein (372 aa).

The N-terminal stretch at 1-24 (MSYYQIIVCILASISYIILLEVIA) is a signal peptide. The PA domain occupies 92 to 215 (PNRNDTDASY…SSYNLLWSDL (124 aa)). A helical membrane pass occupies residues 236–256 (FWPFLLCFSPSIIMLITVQAL). At Ser-280 the chain carries Phosphoserine. Residues 321-363 (CVICLESFTKGDKVVALPCKHEFHRPCIAKWIVDYRHACPTCN) form an RING-type; atypical zinc finger.

It is found in the golgi apparatus membrane. Its subcellular location is the vacuole membrane. This is an uncharacterized protein from Schizosaccharomyces pombe (strain 972 / ATCC 24843) (Fission yeast).